Here is an 859-residue protein sequence, read N- to C-terminus: Active breakpoint cluster region-related protein (859 aa).

The segment at 31–84 (AEGHEEQKGPPEGSETMPYIDESPTMSPQLSARSQGGGESISPTPPEGLAPGVE) is disordered. A compositionally biased stretch (polar residues) spans 54-64 (PTMSPQLSARS). Residue serine 57 is modified to Phosphoserine. A DH domain is found at 91–284 (MRKLVLSGFL…QNFLSSINED (194 aa)). In terms of domain architecture, PH spans 301–459 (QLVKDGFLVE…WREAIQKLQK (159 aa)). In terms of domain architecture, C2 spans 484 to 613 (TVHNIPVTSN…ESKNWHTDVI (130 aa)). Residues 647–845 (VKISVVTKRE…YYLQHPPISF (199 aa)) form the Rho-GAP domain.

As to quaternary structure, interacts with DLG4. Expressed in brain, including the cortex, hippocampus, cerebellum, and brainstem, as well as the spinal cord (at protein level).

Its subcellular location is the cell projection. It localises to the dendritic spine. The protein resides in the axon. It is found in the synapse. Protein with a unique structure having two opposing regulatory activities toward small GTP-binding proteins. The C-terminus is a GTPase-activating protein domain which stimulates GTP hydrolysis by RAC1, RAC2 and CDC42. Accelerates the intrinsic rate of GTP hydrolysis of RAC1 or CDC42, leading to down-regulation of the active GTP-bound form. The central Dbl homology (DH) domain functions as guanine nucleotide exchange factor (GEF) that modulates the GTPases CDC42, RHOA and RAC1. Promotes the conversion of CDC42, RHOA and RAC1 from the GDP-bound to the GTP-bound form. Functions as an important negative regulator of neuronal RAC1 activity. Regulates macrophage functions such as CSF-1 directed motility and phagocytosis through the modulation of RAC1 activity. In Rattus norvegicus (Rat), this protein is Active breakpoint cluster region-related protein.